The following is a 352-amino-acid chain: Isoflavone-7-O-methyltransferase 8 (352 aa).

Valine 118–tyrosine 127 contacts substrate. The S-adenosyl-L-methionine site is built by glycine 196, aspartate 219, aspartate 239, methionine 240, and lysine 253. Histidine 257 functions as the Proton acceptor in the catalytic mechanism.

The protein belongs to the class I-like SAM-binding methyltransferase superfamily. Cation-independent O-methyltransferase family. COMT subfamily. Homodimer.

The catalysed reaction is a 7-hydroxyisoflavone + S-adenosyl-L-methionine = a 7-methoxyisoflavone + S-adenosyl-L-homocysteine + H(+). It participates in phytoalexin biosynthesis; medicarpin biosynthesis. Functionally, transfers a methyl group to 7-hydroxyls of the isoflavones daidzein, genistein and 6,7,4'-trihydroxyisoflavone. Can also methylate (+)6a-hydroxymaackiain with lower efficiency. The sequence is that of Isoflavone-7-O-methyltransferase 8 from Medicago sativa (Alfalfa).